The primary structure comprises 292 residues: Glutamate racemase (292 aa).

Residues 10–11 (DS) and 42–43 (YG) contribute to the substrate site. The active-site Proton donor/acceptor is the Cys-73. 74–75 (NS) contributes to the substrate binding site. The Proton donor/acceptor role is filled by Cys-186. 187-188 (TH) contributes to the substrate binding site.

The protein belongs to the aspartate/glutamate racemases family.

The catalysed reaction is L-glutamate = D-glutamate. The protein operates within cell wall biogenesis; peptidoglycan biosynthesis. Its function is as follows. Provides the (R)-glutamate required for cell wall biosynthesis. This is Glutamate racemase from Beutenbergia cavernae (strain ATCC BAA-8 / DSM 12333 / CCUG 43141 / JCM 11478 / NBRC 16432 / NCIMB 13614 / HKI 0122).